A 249-amino-acid polypeptide reads, in one-letter code: 5'-nucleotidase SurE (249 aa).

Residues Asp8, Asp9, Ser39, and Asn91 each contribute to the a divalent metal cation site.

The protein belongs to the SurE nucleotidase family. A divalent metal cation is required as a cofactor.

It is found in the cytoplasm. The catalysed reaction is a ribonucleoside 5'-phosphate + H2O = a ribonucleoside + phosphate. Functionally, nucleotidase that shows phosphatase activity on nucleoside 5'-monophosphates. The sequence is that of 5'-nucleotidase SurE from Pseudomonas putida (strain ATCC 700007 / DSM 6899 / JCM 31910 / BCRC 17059 / LMG 24140 / F1).